We begin with the raw amino-acid sequence, 282 residues long: MGAITLDGKATRDEILIDLKQRVAALTESGRTPGLGTILVGDDPGSHAYVRGKHADCAKVGITSIRRDLPVDITTAVLHDTIEELNANPDCTGYIVQLPLPKYLDENTALERVDPAKDADGLHPTNLGRLVLSTPAPLPCTARGILHLLRRYGVEIAGTHVVIIGRGVTVGRPLGLLLTRRSENATVTLCHTGTRNLAALTKQADIIVAAVGVPHLLTADMVRPGAVVVDVGVSRVETRLVGDVHPDVWEVAGHVSPNPGGVGPLTRVFLLTNVVELAEGRQ.

NADP(+) is bound by residues 165 to 167, Thr192, and Val233; that span reads GRG.

Belongs to the tetrahydrofolate dehydrogenase/cyclohydrolase family. As to quaternary structure, homodimer.

It carries out the reaction (6R)-5,10-methylene-5,6,7,8-tetrahydrofolate + NADP(+) = (6R)-5,10-methenyltetrahydrofolate + NADPH. The enzyme catalyses (6R)-5,10-methenyltetrahydrofolate + H2O = (6R)-10-formyltetrahydrofolate + H(+). The protein operates within one-carbon metabolism; tetrahydrofolate interconversion. In terms of biological role, catalyzes the oxidation of 5,10-methylenetetrahydrofolate to 5,10-methenyltetrahydrofolate and then the hydrolysis of 5,10-methenyltetrahydrofolate to 10-formyltetrahydrofolate. The chain is Bifunctional protein FolD from Mycobacterium leprae (strain Br4923).